Here is a 424-residue protein sequence, read N- to C-terminus: Ubiquitin carboxyl-terminal hydrolase 12/46 homolog (424 aa).

One can recognise a USP domain in the interval 24 to 421 (FGLVNFGNTC…TGYILFYQSR (398 aa)). Cys33 functions as the Nucleophile in the catalytic mechanism. The interval 131–189 (NAGPSNGNPKATNQGGSTSAMASSIASKSSSTSNSNSNSNSTTNSNGNSSNSTGSLNAN) is disordered. Residues 133-144 (GPSNGNPKATNQ) are compositionally biased toward polar residues. A compositionally biased stretch (low complexity) spans 145–189 (GGSTSAMASSIASKSSSTSNSNSNSNSTTNSNGNSSNSTGSLNAN). The Proton acceptor role is filled by His369.

It belongs to the peptidase C19 family. As to quaternary structure, catalytic component of the Usp12-46 deubiquitylase complex consisting of Usp12-46, Wdr20 and Uaf1. The Usp12-46 deubiquitylase complex associates with arr/arrow; the interaction leads to deubiquitination and stabilization of arr/arrow.

The catalysed reaction is Thiol-dependent hydrolysis of ester, thioester, amide, peptide and isopeptide bonds formed by the C-terminal Gly of ubiquitin (a 76-residue protein attached to proteins as an intracellular targeting signal).. Its function is as follows. Catalytic component of the Usp12-46 deubiquitylase complex. Deubiquitylates the wg/wingless-signaling receptor arr/arrow, which stabilizes the receptor and increases its concentration at the cell surface; this enhances the sensitivity of cells to wg/wingless-signal stimulation. This increases the amplitude and spatial range of the signaling response to the wg/wingless morphogen gradient, facilitating the precise, concentration-dependent regulation of its target genes. Required for wg/wingless-mediated signaling in the wing imaginal disc and for wg/wingless-dependent regulation of adult intestinal stem cell proliferation. Negative regulator of Notch signaling, possibly by regulating lysosomal degradation of N/Notch and affecting cell surface receptor levels; this may be context and cell-type specific function involved in external sensory organ development but not in wing imaginal-disc dorsoventral boundary signaling. Protects against HTT/huntingtin-induced polyglutamine expansion-dependent neurodegeneration. The chain is Ubiquitin carboxyl-terminal hydrolase 12/46 homolog from Drosophila melanogaster (Fruit fly).